We begin with the raw amino-acid sequence, 692 residues long: MSRTLFVTTALPYANGSFHIGHIMEYIQADIWVRSMRMAGHTVHFVGADDAHGAPIMLKAEKEGITPQALVARYAAERPRYLDGFHIRFDHWHSTDTPENVALSQEIYRALKSEGLIETRSIEQFYDPVKGMFLADRYIKGECPRCHAKDQYGDSCEVCGAVYAPTELINPYSALTGAAPVLKSSDHFFFKLSDPRCVEFLQQWTTGANRQGVKHLQAEVQAKTREWLVGDDGEAKLGDWDISRDAPYFGIEIPDAPGKYFYVWLDAPVGYLASLKSYCAAKGLDFDALLDPAGPTEQVHFIGKDIIYFHALFWPAMLKFAGRKTPDQLNVHGFITVSGEKMSKSRGTGISPLRYLEIGMDAEWLRYYMAAKLNARVEDMDFNPEDFVARVNSDLVGKYVNIASRAAAFITRHFDGELAYDGDTDALAAEFAQQAESIRAAFEAREYNRAVREIMAHADRINQAFDAAQPWVMAKGIGAADAATRARLQDICSRALAGFKALSVMLAPVLPALASRVARELFGANADFAWGDAQQLPQRVAPFKHLMQRVDPKLLDDLFEPPAAEASAPAALPGGEALADTITIDDFAKIDLRIARIVNCEEVEGSTKLLRLTLDVGEGRHRNVFSGIKSAYQPQDLVGKLTVLVANLAPRKMKFGVSEGMVLAASHADEKAEPGIYVLEPWPGAQPGMRVR.

The short motif at 12–22 (PYANGSFHIGH) is the 'HIGH' region element. Zn(2+)-binding residues include Cys143, Cys146, Cys156, and Cys159. A 'KMSKS' region motif is present at residues 341–345 (KMSKS). Residue Lys344 coordinates ATP. In terms of domain architecture, tRNA-binding spans 586–692 (DFAKIDLRIA…PGAQPGMRVR (107 aa)).

It belongs to the class-I aminoacyl-tRNA synthetase family. MetG type 1 subfamily. As to quaternary structure, homodimer. Requires Zn(2+) as cofactor.

The protein localises to the cytoplasm. It carries out the reaction tRNA(Met) + L-methionine + ATP = L-methionyl-tRNA(Met) + AMP + diphosphate. Functionally, is required not only for elongation of protein synthesis but also for the initiation of all mRNA translation through initiator tRNA(fMet) aminoacylation. The sequence is that of Methionine--tRNA ligase from Bordetella pertussis (strain Tohama I / ATCC BAA-589 / NCTC 13251).